A 266-amino-acid chain; its full sequence is Short-chain dehydrogenase/reductase AacuF (266 aa).

Positions 13, 57, and 85 each coordinate NADP(+). Catalysis depends on proton donor residues Ser145 and Tyr164. 3 residues coordinate NADP(+): Tyr164, Lys168, and Val198. The active-site Lowers pKa of active site Tyr is Lys168.

Belongs to the short-chain dehydrogenases/reductases (SDR) family.

It functions in the pathway secondary metabolite biosynthesis. Short-chain dehydrogenase/reductase; part of the gene cluster that mediates the biosynthesis of the tetrahydroxanthone dimer secalonic acid D. The pathway begins with the synthesis of atrochrysone thioester by the polyketide synthase AacuL. The atrochrysone carboxyl ACP thioesterase AacuM then breaks the thioester bond and releases the atrochrysone carboxylic acid from AacuL. Atrochrysone carboxylic acid is decarboxylated by the decarboxylase AacuI, and oxidized by the anthrone oxygenase AacuG to yield emodin. Emodin is then reduced to emodin hydroquinone by a yet unidentified oxidoreductase. A-ring reduction by the short chain dehydrogenase AacuN, dehydration by the scytalone dehydratase-like protein AacuK and probable spontaneous re-oxidation, results in overall deoxygenation to chrysophanol. Baeyer-Villiger oxidation by the Baeyer-Villiger monooxygenase (BVMO) AacuH then yields monodictyphenone. Monodictyphenone is transformed into compounds with the tetrahydroxanthone skeleton via methylesterification by the methyltransferase AacuQ, followed by the action of the flavin-dependent monooxygenase AacuC, the isomerase AacuP, and the short chain dehydrogenase/reductase AacuF or AacuD. AacuF and AacuD should accept the same compound as a substrate but perform the ketoreduction with a different stereoselectivity, thus yielding blennolides B and A, respectively. In the final step of the biosynthesis, the cytochrome P450 monooxygenase AacuE accepts blennolide B and/or blennolide A to conduct the dimerization reaction to furnish the tetrahydroxanthone dimers, secalonic acids D, B, and F. The protein is Short-chain dehydrogenase/reductase AacuF of Aspergillus aculeatus (strain ATCC 16872 / CBS 172.66 / WB 5094).